A 360-amino-acid chain; its full sequence is uncharacterized protein (360 aa).

This is an uncharacterized protein from Ostreid herpesvirus 1 (isolate France) (OsHV-1).